The following is an 81-amino-acid chain: Sulfur carrier protein TusA (81 aa).

Cys-19 acts as the Cysteine persulfide intermediate in catalysis.

It belongs to the sulfur carrier protein TusA family.

The protein resides in the cytoplasm. Sulfur carrier protein which probably makes part of a sulfur-relay system. The sequence is that of Sulfur carrier protein TusA from Shewanella baltica (strain OS185).